A 123-amino-acid polypeptide reads, in one-letter code: Large ribosomal subunit protein bL17 (123 aa).

This sequence belongs to the bacterial ribosomal protein bL17 family. In terms of assembly, part of the 50S ribosomal subunit. Contacts protein L32.

In Borrelia hermsii (strain HS1 / DAH), this protein is Large ribosomal subunit protein bL17.